We begin with the raw amino-acid sequence, 21 residues long: M-lycotoxin-Ls4a (21 aa).

Residue leucine 21 is modified to Leucine amide.

As to expression, expressed by the venom gland.

The protein localises to the secreted. In terms of biological role, may inhibit growth of bacteria. This is M-lycotoxin-Ls4a from Lycosa singoriensis (Wolf spider).